We begin with the raw amino-acid sequence, 104 residues long: ATP-dependent Clp protease adapter protein ClpS (104 aa).

The interval Met-1–Pro-20 is disordered.

Belongs to the ClpS family. In terms of assembly, binds to the N-terminal domain of the chaperone ClpA.

In terms of biological role, involved in the modulation of the specificity of the ClpAP-mediated ATP-dependent protein degradation. The sequence is that of ATP-dependent Clp protease adapter protein ClpS from Synechococcus sp. (strain CC9902).